Here is a 232-residue protein sequence, read N- to C-terminus: Orotidine 5'-phosphate decarboxylase (232 aa).

Substrate contacts are provided by residues aspartate 10, lysine 32, 59-68 (DLKFHDIPNT), threonine 119, arginine 180, glutamine 189, glycine 209, and arginine 210. Catalysis depends on lysine 61, which acts as the Proton donor.

The protein belongs to the OMP decarboxylase family. Type 1 subfamily. In terms of assembly, homodimer.

The catalysed reaction is orotidine 5'-phosphate + H(+) = UMP + CO2. It functions in the pathway pyrimidine metabolism; UMP biosynthesis via de novo pathway; UMP from orotate: step 2/2. In terms of biological role, catalyzes the decarboxylation of orotidine 5'-monophosphate (OMP) to uridine 5'-monophosphate (UMP). In Actinobacillus succinogenes (strain ATCC 55618 / DSM 22257 / CCUG 43843 / 130Z), this protein is Orotidine 5'-phosphate decarboxylase.